A 22-amino-acid polypeptide reads, in one-letter code: Fuctinin-1 (22 aa).

Residues 1–22 form a disordered region; it reads SASPGLPKGEKEQQEAIEHIDE. Residues 8-22 show a composition bias toward basic and acidic residues; the sequence is KGEKEQQEAIEHIDE.

This sequence to human SET/PHAPII protein. As to quaternary structure, oligomer.

It is found in the cytoplasm. Its function is as follows. Has a role in the physiological regulation of fucosylation processes. In Rattus norvegicus (Rat), this protein is Fuctinin-1.